The primary structure comprises 119 residues: Beta-2-microglobulin (119 aa).

The N-terminal stretch at 1 to 20 (MACFVVVALLVLLSLSGLEA) is a signal peptide. The 90-residue stretch at 25–114 (PKIQVYSRHP…VTFSTPKTVK (90 aa)) folds into the Ig-like C1-type domain. A disulfide bridge connects residues Cys45 and Cys100.

Belongs to the beta-2-microglobulin family. As to quaternary structure, heterodimer of an alpha chain and a beta chain. Beta-2-microglobulin is the beta-chain of major histocompatibility complex class I molecules.

The protein localises to the secreted. In terms of biological role, component of the class I major histocompatibility complex (MHC). Involved in the presentation of peptide antigens to the immune system. In Leontopithecus chrysopygus (Golden-rumped lion tamarin), this protein is Beta-2-microglobulin (B2M).